We begin with the raw amino-acid sequence, 526 residues long: Lysine--tRNA ligase (526 aa).

Residues 44 to 52 carry the 'HIGH' region motif; that stretch reads PSGLPHIGT. The short motif at 290-294 is the 'KMSKS' region element; that stretch reads KISKS. Lys-293 contributes to the ATP binding site.

It belongs to the class-I aminoacyl-tRNA synthetase family.

It localises to the cytoplasm. It carries out the reaction tRNA(Lys) + L-lysine + ATP = L-lysyl-tRNA(Lys) + AMP + diphosphate. This is Lysine--tRNA ligase from Rickettsia typhi (strain ATCC VR-144 / Wilmington).